We begin with the raw amino-acid sequence, 852 residues long: Translation initiation factor IF-2 (852 aa).

Positions 1–240 are disordered; it reads MEDKNKTIKE…KTSSDKRDFS (240 aa). Residues 78–90 show a composition bias toward basic and acidic residues; that stretch reads KEVKYEESSRKQD. Residues 106–120 are compositionally biased toward polar residues; sequence VRPSGDSSYPVSRSP. The span at 150-200 shows a compositional bias: gly residues; the sequence is RGPGQGGGYQGNRGPGQGGGYQGNRGPGQQTGPGNRFGGSGPGNRSGGPGG. Residues 227 to 240 show a composition bias toward basic and acidic residues; the sequence is HDKEKTSSDKRDFS. Residues 347–516 form the tr-type G domain; that stretch reads NRPPVVTIMG…LLQAEVMDLK (170 aa). Residues 356–363 form a G1 region; it reads GHVDHGKT. 356–363 is a GTP binding site; the sequence is GHVDHGKT. The tract at residues 381–385 is G2; the sequence is GITQH. The G3 stretch occupies residues 402-405; sequence DTPG. Residues 402–406 and 456–459 contribute to the GTP site; these read DTPGH and NKID. The segment at 456 to 459 is G4; sequence NKID. The G5 stretch occupies residues 492–494; sequence SAR.

This sequence belongs to the TRAFAC class translation factor GTPase superfamily. Classic translation factor GTPase family. IF-2 subfamily.

Its subcellular location is the cytoplasm. One of the essential components for the initiation of protein synthesis. Protects formylmethionyl-tRNA from spontaneous hydrolysis and promotes its binding to the 30S ribosomal subunits. Also involved in the hydrolysis of GTP during the formation of the 70S ribosomal complex. This chain is Translation initiation factor IF-2, found in Leptospira borgpetersenii serovar Hardjo-bovis (strain JB197).